Here is a 964-residue protein sequence, read N- to C-terminus: MALLCGLGQVTLRLWVSLPFQTENRIGFLAAGAFLRSGGMEALTTQLGPGREGSSSPNSKQELQPYSGSSALKPNQVGETSLYGVPIVSLVIDGQERLCLAQISNTLLKNYSYNEIHNRRVALGITCVQCTPVQLEILRRAGAMPISSRRCGMITKREAERLCKSFLGEHKPPKLPENFAFDVVHECAWGSRGSFIPARYNSSRAKCIKCGYCSMYFSPNKFIFHSHRTPDAKYTQPDAANFNSWRRHLKLSDKSATDELSHAWEDVKAMFNGGTRKRTFSLQGGGGGGANSGSGGAGKGGAGGGGGPGCGSEMAPGPPPHKSLRCGEDEASGPPGPPPPHPQRALGLAAAANGPAGPGGPGGSAGVRSYPVIPVPSKGFGLLQKLPPPLFPHPYGFPTAFGLCPKKDDPVLVAGEPKGGPGTGSGGGAGTAAGAGGPGAGHLPPGAGPGPGGGTMFWGHQPSGAAKDAAAVAAAAAAATVYPTFPMFWPAAGSLPVPPYPAAQSQAKAVAAAVAAAAAAAAAAAGGGGPESLDGAEPAKEGSLGTEERCPSALSRGPLDEDGADEALPPSLAPLAPPPPPPARKSSYVSAFRPVVKDAESIAKLYGSAREAYGSGPARGPVPGTGTGGGYVSPDFLSEGSSSYHSASPDVDTADEPEVDVESNRFPDEEGAQEDTEPSVPSTGGGPDGDQPAGPPSVTSSGADGPTDSADGDSPRPRRRLGPPPAIRSAFGDLVADDVVRRTERSPPNGGYELREPCGPLGGPAAAKVYVPERDEHVKSAAAAAALGPAASYLCTPETHEPDKEDNHSTTADDLETRKSFSDQRSVSQPSPANTDRGEDGLTLDVTGTQLVEKDIENLAREELQKLLLEQMELRKKLEREFQSLKDNFQDQMKRELAYREEMVQQLQIVRDTLCNELDQERKARYAIQQKLKEAHDALHHFSCKMLTPRHCTGNCSFKPPLLP.

Disordered regions lie at residues 45–72 (TQLG…SSAL), 278–365 (RTFS…GGSA), 414–452 (AGEP…PGPG), 525–587 (AGGG…RKSS), 610–766 (REAY…GPAA), and 793–842 (YLCT…EDGL). Over residues 283-310 (QGGGGGGANSGSGGAGKGGAGGGGGPGC) the composition is skewed to gly residues. Residues 345-355 (ALGLAAAANGP) show a composition bias toward low complexity. Gly residues-rich tracts occupy residues 356-365 (AGPGGPGGSA) and 417-440 (PKGG…GPGA). A compositionally biased stretch (pro residues) spans 571 to 583 (SLAPLAPPPPPPA). Over residues 652–661 (DTADEPEVDV) the composition is skewed to acidic residues. Residues 798-808 (ETHEPDKEDNH) are compositionally biased toward basic and acidic residues. Positions 823 to 834 (DQRSVSQPSPAN) are enriched in polar residues. A coiled-coil region spans residues 857-921 (ENLAREELQK…DTLCNELDQE (65 aa)).

The protein belongs to the SKI family. In terms of assembly, interacts with LBX1. Interacts with SMAD1, SMAD2 and SMAD3.

Its subcellular location is the nucleus. Functionally, inhibits BMP signaling. Acts as a transcriptional corepressor of LBX1. In Rattus norvegicus (Rat), this protein is SKI family transcriptional corepressor 1 (Skor1).